Consider the following 91-residue polypeptide: Ragulator complex protein LAMTOR5 homolog (91 aa).

It belongs to the LAMTOR5 family. As to quaternary structure, part of the Ragulator complex.

It localises to the cytoplasm. Its subcellular location is the lysosome. Functionally, regulator of the TOR pathway, a signaling cascade that promotes cell growth in response to growth factors, energy levels, and amino acids. As part of the Ragulator complex, may activate the TOR signaling cascade in response to amino acids. The protein is Ragulator complex protein LAMTOR5 homolog of Ixodes scapularis (Black-legged tick).